Consider the following 204-residue polypeptide: Nucleoside triphosphate pyrophosphatase (204 aa).

The Proton acceptor role is filled by D78.

This sequence belongs to the Maf family. A divalent metal cation serves as cofactor.

The protein localises to the cytoplasm. It carries out the reaction a ribonucleoside 5'-triphosphate + H2O = a ribonucleoside 5'-phosphate + diphosphate + H(+). It catalyses the reaction a 2'-deoxyribonucleoside 5'-triphosphate + H2O = a 2'-deoxyribonucleoside 5'-phosphate + diphosphate + H(+). Its function is as follows. Nucleoside triphosphate pyrophosphatase. May have a dual role in cell division arrest and in preventing the incorporation of modified nucleotides into cellular nucleic acids. This Prochlorococcus marinus (strain MIT 9215) protein is Nucleoside triphosphate pyrophosphatase.